We begin with the raw amino-acid sequence, 396 residues long: Digeranylgeranylglycerophospholipid reductase (396 aa).

FAD-binding residues include G14, E33, C44, G45, G47, R100, A124, E162, D283, G295, and I296. A 2,3-bis-O-(geranylgeranyl)-sn-glycerol 1-phospholipid-binding residues include K338 and V374.

This sequence belongs to the geranylgeranyl reductase family. DGGGPL reductase subfamily. Requires FAD as cofactor.

It carries out the reaction 2,3-bis-O-(phytanyl)-sn-glycerol 1-phosphate + 8 NADP(+) = 2,3-bis-O-(geranylgeranyl)-sn-glycerol 1-phosphate + 8 NADPH + 8 H(+). It catalyses the reaction 2,3-bis-O-(phytanyl)-sn-glycerol 1-phosphate + 8 NAD(+) = 2,3-bis-O-(geranylgeranyl)-sn-glycerol 1-phosphate + 8 NADH + 8 H(+). The catalysed reaction is a 2,3-bis-O-phytanyl-sn-glycerol 1-phospholipid + 8 A = a 2,3-bis-O-(geranylgeranyl)-sn-glycerol 1-phospholipid + 8 AH2. The enzyme catalyses CDP-2,3-bis-O-(geranylgeranyl)-sn-glycerol + 8 AH2 = CDP-2,3-bis-O-(phytanyl)-sn-glycerol + 8 A. It carries out the reaction archaetidylserine + 8 AH2 = 2,3-bis-O-phytanyl-sn-glycero-3-phospho-L-serine + 8 A. It participates in membrane lipid metabolism; glycerophospholipid metabolism. Functionally, is involved in the reduction of 2,3-digeranylgeranylglycerophospholipids (unsaturated archaeols) into 2,3-diphytanylglycerophospholipids (saturated archaeols) in the biosynthesis of archaeal membrane lipids. Catalyzes the formation of archaetidic acid (2,3-di-O-phytanyl-sn-glyceryl phosphate) from 2,3-di-O-geranylgeranylglyceryl phosphate (DGGGP) via the hydrogenation of each double bond of the isoprenoid chains. Is also probably able to reduce double bonds of geranyl groups in CDP-2,3-bis-O-(geranylgeranyl)-sn-glycerol and archaetidylserine, thus acting at various stages in the biosynthesis of archaeal membrane lipids. In Thermoplasma volcanium (strain ATCC 51530 / DSM 4299 / JCM 9571 / NBRC 15438 / GSS1), this protein is Digeranylgeranylglycerophospholipid reductase.